The sequence spans 485 residues: NADH-quinone oxidoreductase subunit N (485 aa).

14 consecutive transmembrane segments (helical) span residues 8 to 28 (LIAL…MLSI), 35 to 55 (FLNA…LWFV), 71 to 91 (GFAM…CTFA), 105 to 125 (FYLL…ANHL), 127 to 147 (ALFL…GYAF), 159 to 179 (YTIL…LVYA), 203 to 223 (LLAG…LVPF), 235 to 255 (PAPV…GVVM), 271 to 291 (VVLG…ALSQ), 297 to 317 (LLGY…IVLQ), 326 to 346 (VGVY…VVSL), 373 to 393 (AAVM…LGFI), 408 to 430 (WWLV…RVAV), and 455 to 475 (IVVL…QPLI).

Belongs to the complex I subunit 2 family. NDH-1 is composed of 13 different subunits. Subunits NuoA, H, J, K, L, M, N constitute the membrane sector of the complex.

The protein localises to the cell inner membrane. The catalysed reaction is a quinone + NADH + 5 H(+)(in) = a quinol + NAD(+) + 4 H(+)(out). Its function is as follows. NDH-1 shuttles electrons from NADH, via FMN and iron-sulfur (Fe-S) centers, to quinones in the respiratory chain. The immediate electron acceptor for the enzyme in this species is believed to be ubiquinone. Couples the redox reaction to proton translocation (for every two electrons transferred, four hydrogen ions are translocated across the cytoplasmic membrane), and thus conserves the redox energy in a proton gradient. The protein is NADH-quinone oxidoreductase subunit N of Salmonella choleraesuis (strain SC-B67).